Reading from the N-terminus, the 333-residue chain is L-lactate dehydrogenase B chain (333 aa).

NAD(+) contacts are provided by residues 29–57 and Arg-99; that span reads GQVG…LEDK. Substrate is bound by residues Arg-106, Asn-138, and Arg-169. Asn-138 contacts NAD(+). The Proton acceptor role is filled by His-193. Thr-248 lines the substrate pocket.

Belongs to the LDH/MDH superfamily. LDH family. Homotetramer.

Its subcellular location is the cytoplasm. The catalysed reaction is (S)-lactate + NAD(+) = pyruvate + NADH + H(+). The protein operates within fermentation; pyruvate fermentation to lactate; (S)-lactate from pyruvate: step 1/1. Its function is as follows. Interconverts simultaneously and stereospecifically pyruvate and lactate with concomitant interconversion of NADH and NAD(+). The chain is L-lactate dehydrogenase B chain (LDHB) from Gallus gallus (Chicken).